A 7913-amino-acid polypeptide reads, in one-letter code: Nonribosomal peptide synthetase dtxS1 (7913 aa).

Residues 263-662 are adenylation 1; the sequence is FEQRSRAHPN…GRNDNQVKIR (400 aa). Residues 789-865 enclose the Carrier 1 domain; it reads QPLSEVEKQV…NVAGQARRTT (77 aa). Serine 826 carries the O-(pantetheine 4'-phosphoryl)serine modification. Residues 903 to 1171 are condensation 1; the sequence is QDAFPCTSLQ…ITTVPVRIRL (269 aa). The tract at residues 1332–1740 is adenylation 2; that stretch reads LETQAHSRPD…GRKDAQVKIR (409 aa). One can recognise a Carrier 2 domain in the interval 1865-1941; the sequence is QPRTKLERQL…NLAQATGTQG (77 aa). Serine 1902 is modified (O-(pantetheine 4'-phosphoryl)serine). A condensation 2 region spans residues 1965–2249; it reads PAQLSPIQRL…FSTIFPVRVS (285 aa). Positions 2863–3255 are adenylation 3; the sequence is LAQPHEPAIC…ARKDAQIKIR (393 aa). The region spanning 3380-3456 is the Carrier 3 domain; sequence QPLSEAERKM…NVTHQAVAQL (77 aa). The residue at position 3417 (serine 3417) is an O-(pantetheine 4'-phosphoryl)serine. The tract at residues 3496–3761 is condensation 3; the sequence is DAFPCTPLQE…FATLPLRVRL (266 aa). Residues 3924–4321 are adenylation 4; it reads DRVRIHPNAP…GRKDDQVKLR (398 aa). Over residues 4439 to 4450 the composition is skewed to polar residues; it reads ELAQARTAQQGP. Residues 4439–4459 form a disordered region; the sequence is ELAQARTAQQGPKRQPASEAE. The 77-residue stretch at 4453-4529 folds into the Carrier 4 domain; that stretch reads QPASEAERQM…EAATQAQMLG (77 aa). O-(pantetheine 4'-phosphoryl)serine is present on serine 4490. A condensation 4 region spans residues 4545-4837; that stretch reads QSFAQARLWF…VNMQCLRVKI (293 aa). The adenylation 5 stretch occupies residues 5006–5405; that stretch reads FRQQVAACAD…RRMDAQVKIR (400 aa). Positions 5933-6009 constitute a Carrier 5 domain; sequence QPTSKTQRQL…DMAEGLPLAK (77 aa). Serine 5970 bears the O-(pantetheine 4'-phosphoryl)serine mark. The condensation 5 stretch occupies residues 6023–6315; it reads VEQSFAQRRL…VNMQCIRIRV (293 aa). The tract at residues 6481–6766 is adenylation 6; that stretch reads FRQQALLNPD…IINAYGPTEN (286 aa). One can recognise a Carrier 6 domain in the interval 7394 to 7470; it reads QPTTDMEREM…DLACHLSPEE (77 aa). O-(pantetheine 4'-phosphoryl)serine is present on serine 7431. A condensation 6 region spans residues 7501–7771; the sequence is EDVLPLTSFQ…CLNIVPIRVN (271 aa).

The protein belongs to the NRP synthetase family.

It participates in secondary metabolite biosynthesis. Its function is as follows. Nonribosomal peptide synthetase; part of the gene cluster that mediates the biosynthesis of destruxins, insecticidal cyclic hexadepsipeptides which induce flaccid paralysis and visceral muscle contraction in insects through targeting the calcium channels and vacuolar-type ATPases. The aldo-keto reductase dtxS3 converts alpha-ketoisocaproic acid from deaminated leucine into alpha-hydroxyisocaproic acid (HIC), which is the first substrate for destruxin assembly by dtxS1. L-aspartate decarboxylase dtxS4 converts aspartic acid into beta-alanine, the last substrate for the destruxin assembly line performed by dtxS1. The nonribosomal peptide synthetase dtxS1 synthesizes destruxins B and B2, whereas the cytochrome P450 monooxygenase dtxS2 is required to convert destruxin B into other destruxin derivatives, including destructins C, D, A and E. Destruxin E-diol (ED) is further produced in a non-enzymatic manner from destruxin E. Destruxins play an important role in virulence and escape from insect host immune defenses. This is Nonribosomal peptide synthetase dtxS1 from Metarhizium robertsii (strain ARSEF 23 / ATCC MYA-3075) (Metarhizium anisopliae (strain ARSEF 23)).